Reading from the N-terminus, the 356-residue chain is Gluconolactonase (356 aa).

Residues 1 to 35 constitute a signal peptide (tat-type signal); the sequence is MTTGRMSRRECLSAAVMVPIAAMTATATITGSAQA.

Homodimer. In terms of processing, predicted to be exported by the Tat system. The position of the signal peptide cleavage has been experimentally proven.

The protein localises to the periplasm. The catalysed reaction is D-glucono-1,5-lactone + H2O = D-gluconate + H(+). It participates in carbohydrate acid metabolism; D-gluconate biosynthesis; D-gluconate from D-glucono-1,5-lactone: step 1/1. Functionally, hydrolyzes the gluconolactone formed by glucose-fructose oxidoreductase, and that formed in aerobic conditions by the glucose dehydrogenase present. The polypeptide is Gluconolactonase (gnl) (Zymomonas mobilis subsp. mobilis (strain ATCC 31821 / ZM4 / CP4)).